The sequence spans 200 residues: MFNIPAVAVSYLIGSLSFAVIVSKYYGMDDPRTYGSGNPGATNVLRSGKKKAAALTLLGDAAKGLVAVLLARVLQEPLGLSDSAIAAVALAALVGHMWPVFFGFKGGKGVATALGVLLALSPATALVCALIWLVMAFGFKVSSLAALTATIAAPVAASFFMPHVSWVWATVAIALLVLFRHKSNIVKLLEGRESKIGGSR.

5 helical membrane-spanning segments follow: residues 2–22 (FNIP…AVIV), 51–71 (KAAA…VLLA), 84–104 (AIAA…FFGF), 114–134 (LGVL…IWLV), and 159–179 (FFMP…LVLF).

This sequence belongs to the PlsY family. As to quaternary structure, probably interacts with PlsX.

The protein localises to the cell inner membrane. It catalyses the reaction an acyl phosphate + sn-glycerol 3-phosphate = a 1-acyl-sn-glycero-3-phosphate + phosphate. It participates in lipid metabolism; phospholipid metabolism. Catalyzes the transfer of an acyl group from acyl-phosphate (acyl-PO(4)) to glycerol-3-phosphate (G3P) to form lysophosphatidic acid (LPA). This enzyme utilizes acyl-phosphate as fatty acyl donor, but not acyl-CoA or acyl-ACP. The polypeptide is Glycerol-3-phosphate acyltransferase (Neisseria meningitidis serogroup B (strain ATCC BAA-335 / MC58)).